Here is a 206-residue protein sequence, read N- to C-terminus: Large ribosomal subunit protein uL4 (206 aa).

The interval 49–76 (QSAKTRTEVRGGGIKPWRQKGTGRARQG) is disordered.

It belongs to the universal ribosomal protein uL4 family. Part of the 50S ribosomal subunit.

Functionally, one of the primary rRNA binding proteins, this protein initially binds near the 5'-end of the 23S rRNA. It is important during the early stages of 50S assembly. It makes multiple contacts with different domains of the 23S rRNA in the assembled 50S subunit and ribosome. In terms of biological role, forms part of the polypeptide exit tunnel. The polypeptide is Large ribosomal subunit protein uL4 (Clostridium botulinum (strain Alaska E43 / Type E3)).